Reading from the N-terminus, the 124-residue chain is MLNTLVVFLGAGLGGALRYGVNVSAARLGGSFPAATMIINVSGSLAMGILAGWFVVRAGLPQSLRLFLTTGILGGFTTFSTFSLEAFLLIERGALAQAVLYVIGSVAAGIAGVAVSFAIIRHFG.

A run of 4 helical transmembrane segments spans residues 1–21 (MLNTLVVFLGAGLGGALRYGV), 36–56 (TMIINVSGSLAMGILAGWFVV), 70–90 (TGILGGFTTFSTFSLEAFLLI), and 100–120 (LYVIGSVAAGIAGVAVSFAII). Na(+) is bound by residues Gly-74 and Thr-77.

This sequence belongs to the fluoride channel Fluc/FEX (TC 1.A.43) family.

It is found in the cell inner membrane. The enzyme catalyses fluoride(in) = fluoride(out). Its activity is regulated as follows. Na(+) is not transported, but it plays an essential structural role and its presence is essential for fluoride channel function. Its function is as follows. Fluoride-specific ion channel. Important for reducing fluoride concentration in the cell, thus reducing its toxicity. The protein is Fluoride-specific ion channel FluC of Methylobacterium sp. (strain 4-46).